A 148-amino-acid polypeptide reads, in one-letter code: Male-specific protein scotti (148 aa).

A disordered region spans residues 56–78 (PQEPPLGVFPAQGGPNGPPRLRK). N129 carries an N-linked (GlcNAc...) asparagine glycan.

The protein belongs to the male-specific scotti family.

Post-meiotically transcribed gene that has a role in late spermiogenesis; required for actin cone progression during spermatid individualization. The chain is Male-specific protein scotti from Drosophila sechellia (Fruit fly).